The primary structure comprises 1204 residues: Major DNA-binding protein (1204 aa).

A disordered region spans residues 289–314 (SGTTTARGARRNDVNSTSKPSPSGGF). The segment at 497-510 (CSLCEKHTRPVCAH) is a zinc-finger region. 2 short sequence motifs (required for filament formation) span residues 841-842 (FW) and 1146-1148 (FNF). The segment at 1177–1204 (LKRPPEDDELFDLSGIPIKHGNITMEMI) is required for nuclear localization.

Belongs to the herpesviridae major DNA-binding protein family. In terms of assembly, homooligomers. Forms double-helical filaments necessary for the formation of replication compartments within the host nucleus. Interacts with the origin-binding protein. Interacts with the helicase primase complex; this interaction stimulates primer synthesis activity of the helicase-primase complex. Interacts with the DNA polymerase. Interacts with the alkaline exonuclease; this interaction increases its nuclease processivity.

The protein resides in the host nucleus. In terms of biological role, plays several crucial roles in viral infection. Participates in the opening of the viral DNA origin to initiate replication by interacting with the origin-binding protein. May disrupt loops, hairpins and other secondary structures present on ssDNA to reduce and eliminate pausing of viral DNA polymerase at specific sites during elongation. Promotes viral DNA recombination by performing strand-transfer, characterized by the ability to transfer a DNA strand from a linear duplex to a complementary single-stranded DNA circle. Can also catalyze the renaturation of complementary single strands. Additionally, reorganizes the host cell nucleus, leading to the formation of prereplicative sites and replication compartments. This process is driven by the protein which can form double-helical filaments in the absence of DNA. The chain is Major DNA-binding protein from Homo sapiens (Human).